Here is a 348-residue protein sequence, read N- to C-terminus: Phenylalanine--tRNA ligase alpha subunit (348 aa).

Position 259 (E259) interacts with Mg(2+).

The protein belongs to the class-II aminoacyl-tRNA synthetase family. Phe-tRNA synthetase alpha subunit type 1 subfamily. As to quaternary structure, tetramer of two alpha and two beta subunits. Mg(2+) serves as cofactor.

The protein localises to the cytoplasm. The catalysed reaction is tRNA(Phe) + L-phenylalanine + ATP = L-phenylalanyl-tRNA(Phe) + AMP + diphosphate + H(+). The sequence is that of Phenylalanine--tRNA ligase alpha subunit from Enterococcus faecalis (strain ATCC 700802 / V583).